The chain runs to 1183 residues: SR-related and CTD-associated factor 4 (1183 aa).

The 139-residue stretch at 1–139 folds into the CID domain; it reads MDAVNAFNQE…PLLDMAAGTS (139 aa). An N6-acetyllysine modification is found at K49. A Phosphoserine modification is found at S154. 2 disordered regions span residues 299-324 and 348-561; these read VPVP…VQQP and HHQV…QIKS. The segment covering 367-380 has biased composition (pro residues); it reads APPPFPPMPQPGMP. Low complexity predominate over residues 381-398; it reads QPGMAQPGLAQPGMAQPT. A compositionally biased stretch (pro residues) spans 399-410; it reads MPQPGMPQPGMP. The segment covering 411–428 has biased composition (low complexity); sequence QPGMAQPGLAQPGMAQPG. The segment covering 429–440 has biased composition (pro residues); the sequence is MPQPAMPQPAMP. A compositionally biased stretch (polar residues) spans 457 to 469; sequence PTFQSTFQPQNEP. The segment covering 488-498 has biased composition (basic and acidic residues); the sequence is EVKRHVPESRK. Basic residues predominate over residues 499–536; it reads SRSRSPKRRRSRSGSRSRRSRHRRSRSRSRDRRRHSPR. Positions 538–553 are enriched in basic and acidic residues; sequence RSQERRDREKERERRQ. The 75-residue stretch at 569 to 643 folds into the RRM domain; the sequence is TTLWVGQLDK…KSIKIAWALN (75 aa). Disordered regions lie at residues 691 to 722, 800 to 858, and 920 to 1183; these read WKGI…IPKP, LPPG…SLPT, and MPPH…EPPR. At S717 the chain carries Phosphoserine. Pro residues-rich tracts occupy residues 800 to 823 and 920 to 952; these read LPPG…PPIS and MPPH…PPHG. Positions 1006 to 1020 are enriched in low complexity; sequence SPSQQPAPAQQQPPQ. S1042 carries the post-translational modification Phosphoserine. A compositionally biased stretch (basic and acidic residues) spans 1047-1122; the sequence is VENDRERYGS…NRKEKHEVAD (76 aa). Polar residues predominate over residues 1136–1145; the sequence is QVGTIDTVSE.

In terms of assembly, interacts with POLR2A; via C-terminal heptapeptide repeat domain (CTD) phosphorylated at 'Ser-2' and 'Ser-5'.

The protein localises to the nucleus. Anti-terminator protein required to prevent early mRNA termination during transcription. Together with SCAF8, acts by suppressing the use of early, alternative poly(A) sites, thereby preventing the accumulation of non-functional truncated proteins. Mechanistically, associates with the phosphorylated C-terminal heptapeptide repeat domain (CTD) of the largest RNA polymerase II subunit (POLR2A), and subsequently binds nascent RNA upstream of early polyadenylation sites to prevent premature mRNA transcript cleavage and polyadenylation. Independently of SCAF8, also acts as a suppressor of transcriptional readthrough. The sequence is that of SR-related and CTD-associated factor 4 from Mus musculus (Mouse).